A 401-amino-acid chain; its full sequence is MLDKQKFVSKLVTTNDTKIVLLVMDGLGDIPVNGKTPLQAASTPNLDSLAKESDLGQTVPVLPGITPGSGPGHLSLFGYDPIKYQIGRGILEALGIGVEVGEKDVVARANFATWDGNVVLDRRAGRPATEESAKVVQLLSEKIKKIEDVEITFYPGKEHRFVVKFTGEGLGDRVTDADPQKEGHPMVWAEGLDEPSKKTARIANELIRKIAEVLKDNPKINFALIRGFSKYPDLPKFPEIYKLRAGAIATYPMYRGLAKLVGMEIIETGQTVEDEINTLKEKWNDFDFFYVHVKKTDSYGEDGKFDEKVKVIEEVDRVIPEILALKPDVLVITGDHSTPVPLKAHSWHPVPLLIWSRYTRRGLSQAFNEFECARGTLGTIHASDVMTLALAYAGRLEKFGA.

The protein belongs to the BPG-independent phosphoglycerate mutase family. A-PGAM subfamily.

The enzyme catalyses (2R)-2-phosphoglycerate = (2R)-3-phosphoglycerate. It functions in the pathway carbohydrate degradation; glycolysis; pyruvate from D-glyceraldehyde 3-phosphate: step 3/5. Functionally, catalyzes the interconversion of 2-phosphoglycerate and 3-phosphoglycerate. The protein is Probable 2,3-bisphosphoglycerate-independent phosphoglycerate mutase of Thermotoga neapolitana (strain ATCC 49049 / DSM 4359 / NBRC 107923 / NS-E).